Here is a 556-residue protein sequence, read N- to C-terminus: Thermosome subunit beta (556 aa).

The tract at residues 530–556 (LSTDKGDDDGGAGGMGGGMGGGMGGMM) is disordered. The segment covering 540–556 (GAGGMGGGMGGGMGGMM) has biased composition (gly residues).

Belongs to the TCP-1 chaperonin family. As to quaternary structure, forms an oligomeric complex of eight-membered rings.

Its function is as follows. Molecular chaperone; binds unfolded polypeptides in vitro, and has a weak ATPase activity. This is Thermosome subunit beta (thsB) from Halobacterium salinarum (strain ATCC 700922 / JCM 11081 / NRC-1) (Halobacterium halobium).